Reading from the N-terminus, the 146-residue chain is Lipoprotein signal peptidase (146 aa).

3 helical membrane passes run 6–26 (IFLLVAIGIFIIDQNIKTLFL), 50–70 (MFAFIGPYLKWVQALLIGGIL), and 82–104 (YAFPAGLLIGGALGNLYDRFVHA). Active-site residues include D108 and D125. A helical membrane pass occupies residues 123–143 (FADVAIDLAVAWILIMVYFFP).

This sequence belongs to the peptidase A8 family.

Its subcellular location is the cell inner membrane. It catalyses the reaction Release of signal peptides from bacterial membrane prolipoproteins. Hydrolyzes -Xaa-Yaa-Zaa-|-(S,diacylglyceryl)Cys-, in which Xaa is hydrophobic (preferably Leu), and Yaa (Ala or Ser) and Zaa (Gly or Ala) have small, neutral side chains.. It participates in protein modification; lipoprotein biosynthesis (signal peptide cleavage). Its function is as follows. This protein specifically catalyzes the removal of signal peptides from prolipoproteins. This chain is Lipoprotein signal peptidase, found in Sulfurovum sp. (strain NBC37-1).